Consider the following 183-residue polypeptide: MTYDYVPLKEKYEKEVVPSMMKEFGYKNKLQVPRLEKIVINMGIGEGSRNADLIEIHARELMAIAGQKPVVTKAKKSIANFKIRKGMPLGLKVTLRGARMYNFLYKLINIVLPKLRDFRGVNPDSFDGKGNYALGLPEQLIFPEIAPDQVKRIQGMDVIIVTTAKTDEEARKLLALLGMPFKR.

This sequence belongs to the universal ribosomal protein uL5 family. Part of the 50S ribosomal subunit; part of the 5S rRNA/L5/L18/L25 subcomplex. Contacts the 5S rRNA and the P site tRNA. Forms a bridge to the 30S subunit in the 70S ribosome.

Its function is as follows. This is one of the proteins that bind and probably mediate the attachment of the 5S RNA into the large ribosomal subunit, where it forms part of the central protuberance. In the 70S ribosome it contacts protein S13 of the 30S subunit (bridge B1b), connecting the 2 subunits; this bridge is implicated in subunit movement. Contacts the P site tRNA; the 5S rRNA and some of its associated proteins might help stabilize positioning of ribosome-bound tRNAs. The polypeptide is Large ribosomal subunit protein uL5 (Kosmotoga olearia (strain ATCC BAA-1733 / DSM 21960 / TBF 19.5.1)).